The following is a 90-amino-acid chain: Probable Fe(2+)-trafficking protein (90 aa).

This sequence belongs to the Fe(2+)-trafficking protein family.

Could be a mediator in iron transactions between iron acquisition and iron-requiring processes, such as synthesis and/or repair of Fe-S clusters in biosynthetic enzymes. In Photobacterium profundum (strain SS9), this protein is Probable Fe(2+)-trafficking protein.